Reading from the N-terminus, the 117-residue chain is MRTLLIRYILWRNDGDPSYYNDDFKKLILFDELVDDDDVCTLIKNMRMTLSDGPLLDRLNQPVNNVEDVKRMIAISAKVARDIGRRSEIRWEDSFTILFRMIEKYFDDLMTDLYGEK.

Belongs to the poxviridae OPG035 family.

Bcl-2-like protein which contributes to virulence by preventing host NF-kappa-B activation in response to pro-inflammatory stimuli such as TNF-alpha or IL1B. The protein is Protein OPG035 (OPG035) of Monkeypox virus.